Here is a 103-residue protein sequence, read N- to C-terminus: Large ribosomal subunit protein bL21 (103 aa).

Belongs to the bacterial ribosomal protein bL21 family. Part of the 50S ribosomal subunit. Contacts protein L20.

Functionally, this protein binds to 23S rRNA in the presence of protein L20. In Caldicellulosiruptor saccharolyticus (strain ATCC 43494 / DSM 8903 / Tp8T 6331), this protein is Large ribosomal subunit protein bL21.